We begin with the raw amino-acid sequence, 172 residues long: Lytic chitin monooxygenase (172 aa).

Residues 1–30 (MHAGRKTAVLIGAALAPVIAVSLPAASASA) form the signal peptide. Cu cation-binding residues include His31 and His106. The 138-residue stretch at 31–168 (HGYISNPPSR…DNAFYACIDV (138 aa)) folds into the Chitin-binding type-4 domain.

Requires Cu(2+) as cofactor.

It is found in the secreted. The enzyme catalyses [(1-&gt;4)-N-acetyl-beta-D-glucosaminyl]n+m + reduced acceptor + O2 = [(1-&gt;4)-N-acetyl-beta-D-glucosaminyl]m-1-(1-&gt;4)-2-(acetylamino)-2-deoxy-D-glucono-1,5-lactone + [(1-&gt;4)-N-acetyl-beta-D-glucosaminyl]n + acceptor + H2O.. It functions in the pathway glycan degradation; chitin degradation. Functionally, involved in chitin degradation. Catalyzes the oxidative cleavage of glycosidic bonds in chitin via a copper-dependent mechanism, leading to oxidized chitooligomers with degrees of polymerization of 4-6. Is not active on cellulose. This chain is Lytic chitin monooxygenase, found in Streptomyces ambofaciens (strain ATCC 23877 / 3486 / DSM 40053 / JCM 4204 / NBRC 12836 / NRRL B-2516).